A 130-amino-acid polypeptide reads, in one-letter code: Small ribosomal subunit protein uS11 (130 aa).

Belongs to the universal ribosomal protein uS11 family. In terms of assembly, part of the 30S ribosomal subunit. Interacts with proteins S7 and S18. Binds to IF-3.

Located on the platform of the 30S subunit, it bridges several disparate RNA helices of the 16S rRNA. Forms part of the Shine-Dalgarno cleft in the 70S ribosome. In Shewanella denitrificans (strain OS217 / ATCC BAA-1090 / DSM 15013), this protein is Small ribosomal subunit protein uS11.